Consider the following 123-residue polypeptide: UPF0102 protein PputGB1_4524 (123 aa).

The protein belongs to the UPF0102 family.

The sequence is that of UPF0102 protein PputGB1_4524 from Pseudomonas putida (strain GB-1).